A 44-amino-acid polypeptide reads, in one-letter code: U2-agatoxin-Ao1s (44 aa).

Positions 1–9 (KKVYSFLKL) are excised as a propeptide. Intrachain disulfides connect cysteine 12–cysteine 28, cysteine 19–cysteine 33, and cysteine 27–cysteine 43.

It belongs to the neurotoxin 01 (U2-agtx) family. Expressed by the venom gland.

The protein resides in the secreted. Its function is as follows. Insect active toxin causing rapid but reversible paralysis in crickets. No activity shown in mammals. Does not show effect on mammalian voltage-gated calcium channels. This Agelena orientalis (Funnel-web spider) protein is U2-agatoxin-Ao1s.